We begin with the raw amino-acid sequence, 138 residues long: Large ribosomal subunit protein bL12c (138 aa).

Belongs to the bacterial ribosomal protein bL12 family. Homodimer. Part of the ribosomal stalk of the 50S ribosomal subunit. Forms a multimeric L10(L12)X complex, where L10 forms an elongated spine to which 2 to 4 L12 dimers bind in a sequential fashion. Binds GTP-bound translation factors.

The protein localises to the plastid. Functionally, forms part of the ribosomal stalk which helps the ribosome interact with GTP-bound translation factors. Is thus essential for accurate translation. The protein is Large ribosomal subunit protein bL12c of Euglena longa (Euglenophycean alga).